A 191-amino-acid polypeptide reads, in one-letter code: Imidazoleglycerol-phosphate dehydratase (191 aa).

Belongs to the imidazoleglycerol-phosphate dehydratase family.

It localises to the cytoplasm. The catalysed reaction is D-erythro-1-(imidazol-4-yl)glycerol 3-phosphate = 3-(imidazol-4-yl)-2-oxopropyl phosphate + H2O. It participates in amino-acid biosynthesis; L-histidine biosynthesis; L-histidine from 5-phospho-alpha-D-ribose 1-diphosphate: step 6/9. The polypeptide is Imidazoleglycerol-phosphate dehydratase (Methanosarcina mazei (strain ATCC BAA-159 / DSM 3647 / Goe1 / Go1 / JCM 11833 / OCM 88) (Methanosarcina frisia)).